Reading from the N-terminus, the 253-residue chain is Imidazole glycerol phosphate synthase subunit HisF (253 aa).

Catalysis depends on residues Asp11 and Asp130.

This sequence belongs to the HisA/HisF family. In terms of assembly, heterodimer of HisH and HisF.

It is found in the cytoplasm. The catalysed reaction is 5-[(5-phospho-1-deoxy-D-ribulos-1-ylimino)methylamino]-1-(5-phospho-beta-D-ribosyl)imidazole-4-carboxamide + L-glutamine = D-erythro-1-(imidazol-4-yl)glycerol 3-phosphate + 5-amino-1-(5-phospho-beta-D-ribosyl)imidazole-4-carboxamide + L-glutamate + H(+). It participates in amino-acid biosynthesis; L-histidine biosynthesis; L-histidine from 5-phospho-alpha-D-ribose 1-diphosphate: step 5/9. IGPS catalyzes the conversion of PRFAR and glutamine to IGP, AICAR and glutamate. The HisF subunit catalyzes the cyclization activity that produces IGP and AICAR from PRFAR using the ammonia provided by the HisH subunit. The polypeptide is Imidazole glycerol phosphate synthase subunit HisF (Ruegeria pomeroyi (strain ATCC 700808 / DSM 15171 / DSS-3) (Silicibacter pomeroyi)).